The following is a 314-amino-acid chain: Olfactory receptor 8D4 (314 aa).

The Extracellular portion of the chain corresponds to methionine 1–leucine 25. A glycan (N-linked (GlcNAc...) asparagine) is linked at asparagine 5. Residues proline 26–isoleucine 46 traverse the membrane as a helical segment. Residues serine 47 to glutamine 54 are Cytoplasmic-facing. Residues leucine 55–serine 75 traverse the membrane as a helical segment. The Extracellular segment spans residues valine 76–isoleucine 99. A disulfide bridge connects residues cysteine 97 and cysteine 189. Residues glutamine 100–cysteine 120 traverse the membrane as a helical segment. Over aspartate 121–arginine 139 the chain is Cytoplasmic. Residues valine 140–glycine 160 form a helical membrane-spanning segment. The Extracellular segment spans residues glycine 161–leucine 197. Residues leucine 198–serine 217 form a helical membrane-spanning segment. The Cytoplasmic segment spans residues tyrosine 218–alanine 237. Residues phenylalanine 238–methionine 258 traverse the membrane as a helical segment. Topologically, residues tyrosine 259–glutamate 271 are extracellular. Residues lysine 272 to leucine 292 form a helical membrane-spanning segment. The Cytoplasmic segment spans residues arginine 293 to glycine 314.

Belongs to the G-protein coupled receptor 1 family.

It is found in the cell membrane. Its function is as follows. Odorant receptor. The sequence is that of Olfactory receptor 8D4 (OR8D4) from Homo sapiens (Human).